The sequence spans 399 residues: Nicotinate phosphoribosyltransferase (399 aa).

Histidine 217 carries the post-translational modification Phosphohistidine; by autocatalysis.

The protein belongs to the NAPRTase family. In terms of processing, transiently phosphorylated on a His residue during the reaction cycle. Phosphorylation strongly increases the affinity for substrates and increases the rate of nicotinate D-ribonucleotide production. Dephosphorylation regenerates the low-affinity form of the enzyme, leading to product release.

The enzyme catalyses nicotinate + 5-phospho-alpha-D-ribose 1-diphosphate + ATP + H2O = nicotinate beta-D-ribonucleotide + ADP + phosphate + diphosphate. The protein operates within cofactor biosynthesis; NAD(+) biosynthesis; nicotinate D-ribonucleotide from nicotinate: step 1/1. In terms of biological role, catalyzes the synthesis of beta-nicotinate D-ribonucleotide from nicotinate and 5-phospho-D-ribose 1-phosphate at the expense of ATP. The sequence is that of Nicotinate phosphoribosyltransferase from Burkholderia orbicola (strain MC0-3).